The chain runs to 195 residues: Thymidine kinase (195 aa).

ATP-binding positions include Ser9–Ser16 and Asp87–Gln90. Glu88 acts as the Proton acceptor in catalysis. Zn(2+)-binding residues include Cys145, Cys147, Cys182, and His185.

This sequence belongs to the thymidine kinase family. In terms of assembly, homotetramer.

It localises to the cytoplasm. The catalysed reaction is thymidine + ATP = dTMP + ADP + H(+). In Mannheimia succiniciproducens (strain KCTC 0769BP / MBEL55E), this protein is Thymidine kinase.